The following is a 365-amino-acid chain: Aminomethyltransferase (365 aa).

It belongs to the GcvT family. In terms of assembly, the glycine cleavage system is composed of four proteins: P, T, L and H.

The enzyme catalyses N(6)-[(R)-S(8)-aminomethyldihydrolipoyl]-L-lysyl-[protein] + (6S)-5,6,7,8-tetrahydrofolate = N(6)-[(R)-dihydrolipoyl]-L-lysyl-[protein] + (6R)-5,10-methylene-5,6,7,8-tetrahydrofolate + NH4(+). Functionally, the glycine cleavage system catalyzes the degradation of glycine. The chain is Aminomethyltransferase from Frankia alni (strain DSM 45986 / CECT 9034 / ACN14a).